Here is a 129-residue protein sequence, read N- to C-terminus: Mitochondrial pyruvate carrier 2 (129 aa).

Over 2 to 22 the chain is Mitochondrial matrix; that stretch reads STSSVRFAFRRFWQSETGPKT. A helical transmembrane segment spans residues 23 to 39; sequence VHFWAPTLKWGLVFAGF. Over 40 to 54 the chain is Mitochondrial intermembrane; sequence SDMKRPVEKISGAQN. The helical transmembrane segment at 55–71 threads the bilayer; it reads LSLLSTALIWTRWSFVI. Topologically, residues 72–74 are mitochondrial matrix; sequence KPR. Residues 75-91 form a helical membrane-spanning segment; sequence NILLASVNSFLCLTAGY. Residues 92-129 lie on the Mitochondrial intermembrane side of the membrane; that stretch reads QLGRIANYRIRNGDSISQLCSYILSGADESKKEITTGR.

Belongs to the mitochondrial pyruvate carrier (MPC) (TC 2.A.105) family. In terms of assembly, the functional 150 kDa pyruvate import complex is a heteromer of MPC1 and either MPC2 or MPC3.

It localises to the mitochondrion. It is found in the mitochondrion inner membrane. The enzyme catalyses pyruvate(out) + H(+)(out) = pyruvate(in) + H(+)(in). In terms of biological role, mediates the uptake of pyruvate into mitochondria. In Saccharomyces cerevisiae (strain ATCC 204508 / S288c) (Baker's yeast), this protein is Mitochondrial pyruvate carrier 2.